Consider the following 195-residue polypeptide: Dynactin subunit 6 (195 aa).

The protein belongs to the dynactin subunits 5/6 family. Dynactin subunit 6 subfamily. In terms of assembly, member of the pointed-end complex of the dynactin shoulder complex which contains dctn4, dctn5 and dctn6 subunits and Actr10. Within the complex dctn6 forms a heterodimer with dctn5. Interacts with plk1.

It is found in the cytoplasm. It localises to the cytoskeleton. The protein resides in the chromosome. The protein localises to the centromere. Its subcellular location is the kinetochore. Functionally, part of the dynactin complex that activates the molecular motor dynein for ultra-processive transport along microtubules. This Danio rerio (Zebrafish) protein is Dynactin subunit 6 (dctn6).